The chain runs to 390 residues: Stearoyl-[acyl-carrier-protein] 9-desaturase, chloroplastic (390 aa).

The transit peptide at 1 to 27 (MALKLCFPPHKMPSFPDARIRSHRVFM) directs the protein to the chloroplast. Fe cation-binding residues include E132, E170, H173, E223, E256, and H259.

Belongs to the fatty acid desaturase type 2 family. As to quaternary structure, homodimer. It depends on Fe(2+) as a cofactor.

It is found in the plastid. The protein resides in the chloroplast. The enzyme catalyses octadecanoyl-[ACP] + 2 reduced [2Fe-2S]-[ferredoxin] + O2 + 2 H(+) = (9Z)-octadecenoyl-[ACP] + 2 oxidized [2Fe-2S]-[ferredoxin] + 2 H2O. It functions in the pathway lipid metabolism; fatty acid metabolism. In terms of biological role, converts stearoyl-ACP to oleoyl-ACP by introduction of a cis double bond between carbons 9 and 10 of the acyl chain. The sequence is that of Stearoyl-[acyl-carrier-protein] 9-desaturase, chloroplastic from Olea europaea (Common olive).